A 407-amino-acid polypeptide reads, in one-letter code: Na(+)-translocating NADH-quinone reductase subunit F (407 aa).

The helical transmembrane segment at 3 to 23 threads the bilayer; it reads IILGVVMFTLIVLALTVMILF. The region spanning 32–126 is the 2Fe-2S ferredoxin-type domain; sequence GDITVEINED…NLKIELPEEI (95 aa). [2Fe-2S] cluster is bound by residues cysteine 69, cysteine 75, cysteine 78, and cysteine 110. The 141-residue stretch at 129–269 folds into the FAD-binding FR-type domain; it reads VKKWTCEVIS…SGPFGEFFAK (141 aa).

It belongs to the NqrF family. In terms of assembly, composed of six subunits; NqrA, NqrB, NqrC, NqrD, NqrE and NqrF. It depends on [2Fe-2S] cluster as a cofactor. FAD is required as a cofactor.

It is found in the cell inner membrane. The catalysed reaction is a ubiquinone + n Na(+)(in) + NADH + H(+) = a ubiquinol + n Na(+)(out) + NAD(+). Functionally, NQR complex catalyzes the reduction of ubiquinone-1 to ubiquinol by two successive reactions, coupled with the transport of Na(+) ions from the cytoplasm to the periplasm. The first step is catalyzed by NqrF, which accepts electrons from NADH and reduces ubiquinone-1 to ubisemiquinone by a one-electron transfer pathway. The sequence is that of Na(+)-translocating NADH-quinone reductase subunit F from Yersinia pseudotuberculosis serotype I (strain IP32953).